The chain runs to 378 residues: UPF0284 protein MK0224 (378 aa).

Belongs to the UPF0284 family.

This chain is UPF0284 protein MK0224, found in Methanopyrus kandleri (strain AV19 / DSM 6324 / JCM 9639 / NBRC 100938).